The chain runs to 278 residues: Elongation factor Ts (278 aa).

An involved in Mg(2+) ion dislocation from EF-Tu region spans residues T82–V85.

Belongs to the EF-Ts family.

It localises to the cytoplasm. In terms of biological role, associates with the EF-Tu.GDP complex and induces the exchange of GDP to GTP. It remains bound to the aminoacyl-tRNA.EF-Tu.GTP complex up to the GTP hydrolysis stage on the ribosome. The chain is Elongation factor Ts from Streptomyces griseus subsp. griseus (strain JCM 4626 / CBS 651.72 / NBRC 13350 / KCC S-0626 / ISP 5235).